A 698-amino-acid chain; its full sequence is Protein arginine N-methyltransferase 7 (698 aa).

SAM-dependent MTase PRMT-type domains follow at residues 14 to 357 (QNTW…YSLW) and 366 to 698 (EKPA…EKSE).

This sequence belongs to the class I-like SAM-binding methyltransferase superfamily. Protein arginine N-methyltransferase family. PRMT7 subfamily.

Its function is as follows. Essential arginine methyltransferase that can both catalyze the formation of omega-N monomethylarginine (MMA) and symmetrical dimethylarginine (sDMA). Specifically mediates the symmetrical dimethylation of arginine residues in the small nuclear ribonucleoproteins SmD1 and SmD3. In Drosophila mojavensis (Fruit fly), this protein is Protein arginine N-methyltransferase 7 (Art7).